Reading from the N-terminus, the 1387-residue chain is Magnesium-chelatase subunit ChlH, chloroplastic (1387 aa).

A chloroplast-targeting transit peptide spans 1-50 (MSSLVSTPFTTATGVQKKLGAPVPLHSFLLSRRQPAAGAGRGRAAAAAIR).

It belongs to the Mg-chelatase subunit H family. In terms of assembly, the magnesium chelatase complex is a heterotrimer consisting of subunits CHLI, CHLD and CHLH.

It is found in the plastid. The protein resides in the chloroplast stroma. Its subcellular location is the chloroplast membrane. The enzyme catalyses protoporphyrin IX + Mg(2+) + ATP + H2O = Mg-protoporphyrin IX + ADP + phosphate + 3 H(+). The protein operates within porphyrin-containing compound metabolism; chlorophyll biosynthesis. In terms of biological role, involved in chlorophyll biosynthesis. Catalyzes the insertion of magnesium ion into protoporphyrin IX to yield Mg-protoporphyrin IX. The reaction takes place in two steps, with an ATP-dependent activation followed by an ATP-dependent chelation step. May be involved in the plastid-to-nucleus retrograde signaling. The polypeptide is Magnesium-chelatase subunit ChlH, chloroplastic (CHLH) (Oryza sativa subsp. japonica (Rice)).